Consider the following 210-residue polypeptide: Thymidylate kinase (210 aa).

11 to 18 lines the ATP pocket; the sequence is GLEGAGKS.

It belongs to the thymidylate kinase family.

It catalyses the reaction dTMP + ATP = dTDP + ADP. Its function is as follows. Phosphorylation of dTMP to form dTDP in both de novo and salvage pathways of dTTP synthesis. In Histophilus somni (strain 2336) (Haemophilus somnus), this protein is Thymidylate kinase.